The chain runs to 129 residues: 3-aminoacrylate deaminase RutC (129 aa).

It belongs to the RutC family.

It carries out the reaction (Z)-3-aminoacrylate + H2O + H(+) = 3-oxopropanoate + NH4(+). In terms of biological role, involved in pyrimidine catabolism. Catalyzes the deamination of 3-aminoacrylate to malonic semialdehyde, a reaction that can also occur spontaneously. RutC may facilitate the reaction and modulate the metabolic fitness, rather than catalyzing essential functions. The protein is 3-aminoacrylate deaminase RutC of Caulobacter sp. (strain K31).